A 386-amino-acid polypeptide reads, in one-letter code: PqqA peptide cyclase (386 aa).

The Radical SAM core domain maps to 9 to 228 (SKPPLWLLAE…RQYIDQHHLK (220 aa)). [4Fe-4S] cluster-binding residues include cysteine 23, cysteine 27, and cysteine 30.

It belongs to the radical SAM superfamily. PqqE family. In terms of assembly, interacts with PqqD. The interaction is necessary for activity of PqqE. The cofactor is [4Fe-4S] cluster.

The catalysed reaction is [PQQ precursor protein] + S-adenosyl-L-methionine = E-Y cross-linked-[PQQ precursor protein] + 5'-deoxyadenosine + L-methionine + H(+). It participates in cofactor biosynthesis; pyrroloquinoline quinone biosynthesis. In terms of biological role, catalyzes the cross-linking of a glutamate residue and a tyrosine residue in the PqqA protein as part of the biosynthesis of pyrroloquinoline quinone (PQQ). This is PqqA peptide cyclase from Acinetobacter baylyi (strain ATCC 33305 / BD413 / ADP1).